Here is a 201-residue protein sequence, read N- to C-terminus: Ribosomal RNA large subunit methyltransferase E (201 aa).

The S-adenosyl-L-methionine site is built by Gly-49, Trp-51, Asp-69, Asp-90, and Asp-113. Lys-153 serves as the catalytic Proton acceptor.

The protein belongs to the class I-like SAM-binding methyltransferase superfamily. RNA methyltransferase RlmE family.

The protein localises to the cytoplasm. The catalysed reaction is uridine(2552) in 23S rRNA + S-adenosyl-L-methionine = 2'-O-methyluridine(2552) in 23S rRNA + S-adenosyl-L-homocysteine + H(+). Functionally, specifically methylates the uridine in position 2552 of 23S rRNA at the 2'-O position of the ribose in the fully assembled 50S ribosomal subunit. The sequence is that of Ribosomal RNA large subunit methyltransferase E from Desulfotalea psychrophila (strain LSv54 / DSM 12343).